Consider the following 136-residue polypeptide: NADPH-dependent 7-cyano-7-deazaguanine reductase (136 aa).

Catalysis depends on Cys50, which acts as the Thioimide intermediate. The active-site Proton donor is the Asp57. Substrate-binding positions include 72–74 (YEL) and 91–92 (HE).

It belongs to the GTP cyclohydrolase I family. QueF type 1 subfamily.

The protein localises to the cytoplasm. It catalyses the reaction 7-aminomethyl-7-carbaguanine + 2 NADP(+) = 7-cyano-7-deazaguanine + 2 NADPH + 3 H(+). It participates in tRNA modification; tRNA-queuosine biosynthesis. Functionally, catalyzes the NADPH-dependent reduction of 7-cyano-7-deazaguanine (preQ0) to 7-aminomethyl-7-deazaguanine (preQ1). The polypeptide is NADPH-dependent 7-cyano-7-deazaguanine reductase (Prochlorococcus marinus (strain AS9601)).